The following is a 233-amino-acid chain: Large ribosomal subunit protein uL1 (233 aa).

Belongs to the universal ribosomal protein uL1 family. In terms of assembly, part of the 50S ribosomal subunit.

Its function is as follows. Binds directly to 23S rRNA. The L1 stalk is quite mobile in the ribosome, and is involved in E site tRNA release. Functionally, protein L1 is also a translational repressor protein, it controls the translation of the L11 operon by binding to its mRNA. This chain is Large ribosomal subunit protein uL1, found in Marinomonas sp. (strain MWYL1).